A 288-amino-acid polypeptide reads, in one-letter code: 2-methoxy-6-polyprenyl-1,4-benzoquinol methylase, mitochondrial (288 aa).

A mitochondrion-targeting transit peptide spans 1 to 27 (MALRSVSRRLGSRILNQRSFVASLHSH). Residues threonine 94, aspartate 130, and 160 to 161 (DA) contribute to the S-adenosyl-L-methionine site.

This sequence belongs to the class I-like SAM-binding methyltransferase superfamily. MenG/UbiE family. Component of a multi-subunit COQ enzyme complex.

The protein resides in the mitochondrion inner membrane. It catalyses the reaction a 2-methoxy-6-(all-trans-polyprenyl)benzene-1,4-diol + S-adenosyl-L-methionine = a 5-methoxy-2-methyl-3-(all-trans-polyprenyl)benzene-1,4-diol + S-adenosyl-L-homocysteine + H(+). It participates in cofactor biosynthesis; ubiquinone biosynthesis. Functionally, methyltransferase required for the conversion of 2-polyprenyl-6-methoxy-1,4-benzoquinol (DDMQH2) to 2-polyprenyl-3-methyl-6-methoxy-1,4-benzoquinol (DMQH2). The polypeptide is 2-methoxy-6-polyprenyl-1,4-benzoquinol methylase, mitochondrial (Arabidopsis thaliana (Mouse-ear cress)).